A 220-amino-acid polypeptide reads, in one-letter code: NADH-quinone oxidoreductase subunit B (220 aa).

Residues Cys37, Cys38, Cys103, and Cys132 each contribute to the [4Fe-4S] cluster site. The segment at 174-220 is disordered; it reads PSSERYAPKNRSQRKLAERQQAAQRREMGAEKPLGALEERAELNAGR. A compositionally biased stretch (basic and acidic residues) spans 210–220; sequence LEERAELNAGR.

This sequence belongs to the complex I 20 kDa subunit family. NDH-1 is composed of 14 different subunits. Subunits NuoB, C, D, E, F, and G constitute the peripheral sector of the complex. The cofactor is [4Fe-4S] cluster.

Its subcellular location is the cell membrane. It catalyses the reaction a quinone + NADH + 5 H(+)(in) = a quinol + NAD(+) + 4 H(+)(out). NDH-1 shuttles electrons from NADH, via FMN and iron-sulfur (Fe-S) centers, to quinones in the respiratory chain. The immediate electron acceptor for the enzyme in this species is believed to be a menaquinone. Couples the redox reaction to proton translocation (for every two electrons transferred, four hydrogen ions are translocated across the cytoplasmic membrane), and thus conserves the redox energy in a proton gradient. This chain is NADH-quinone oxidoreductase subunit B, found in Saccharopolyspora erythraea (strain ATCC 11635 / DSM 40517 / JCM 4748 / NBRC 13426 / NCIMB 8594 / NRRL 2338).